Reading from the N-terminus, the 583-residue chain is Extracellular serine/threonine protein kinase four-jointed (583 aa).

At Met-1–Cys-78 the chain is on the cytoplasmic side. The helical; Signal-anchor for type II membrane protein transmembrane segment at Leu-79–Phe-99 threads the bilayer. The Extracellular segment spans residues Gly-100 to Ser-583. Positions Arg-179–Gln-222 are disordered. Residues Lys-187–Glu-199 are compositionally biased toward basic and acidic residues. Over residues Thr-206 to Ser-219 the composition is skewed to low complexity. N-linked (GlcNAc...) asparagine glycans are attached at residues Asn-310 and Asn-379. The segment at Met-384–Thr-421 is disordered. N-linked (GlcNAc...) asparagine glycosylation occurs at Asn-491.

It belongs to the FJX1/FJ family. Post-translationally, proteolytically cleaved to yield a secreted protein. In the eye disk, expressed in a gradient ahead of the morphogenetic furrow, high at the equator and low at the poles of the eye. In the leg disk, expressed in concentric rings, possibly corresponding to segmental boundaries. In the wing disk, expression is localized in the wing pouch; low in peripheral regions and high towards the center.

Its subcellular location is the golgi apparatus membrane. The protein resides in the secreted. The catalysed reaction is L-seryl-[protein] + ATP = O-phospho-L-seryl-[protein] + ADP + H(+). It catalyses the reaction L-threonyl-[protein] + ATP = O-phospho-L-threonyl-[protein] + ADP + H(+). Its function is as follows. Golgi serine/threonine protein kinase required for intermediate growth in the proximal-distal axis. Phosphorylates specific residues within extracellular cadherin domains of Fat (ft) and Dachsous (ds) as they transit through the Golgi. Acts in ommatidial polarity determination as a secondary signal downstream of Notch, JAK/STAT and wingless. Also necessary for the initiation, up-regulation or maintenance of Notch ligand, Serrate (Ser) expression in legs, thereby participating in a feedback loop with N signaling. Sufficient for joint formation and growth in the leg. The sequence is that of Extracellular serine/threonine protein kinase four-jointed from Drosophila melanogaster (Fruit fly).